The following is a 338-amino-acid chain: Ketol-acid reductoisomerase (NADP(+)) (338 aa).

The 181-residue stretch at 1–181 (MQIYYDKDAD…GGGRAGIIET (181 aa)) folds into the KARI N-terminal Rossmann domain. NADP(+) contacts are provided by residues 24–27 (YGSQ), Arg-47, Ser-50, Ser-52, and 82–85 (DEHQ). The active site involves His-107. An NADP(+)-binding site is contributed by Gly-133. One can recognise a KARI C-terminal knotted domain in the interval 182 to 327 (TFREETETDL…ARLRDMMPWI (146 aa)). 4 residues coordinate Mg(2+): Asp-190, Glu-194, Glu-226, and Glu-230. Ser-251 contacts substrate.

It belongs to the ketol-acid reductoisomerase family. Mg(2+) is required as a cofactor.

The catalysed reaction is (2R)-2,3-dihydroxy-3-methylbutanoate + NADP(+) = (2S)-2-acetolactate + NADPH + H(+). It catalyses the reaction (2R,3R)-2,3-dihydroxy-3-methylpentanoate + NADP(+) = (S)-2-ethyl-2-hydroxy-3-oxobutanoate + NADPH + H(+). It functions in the pathway amino-acid biosynthesis; L-isoleucine biosynthesis; L-isoleucine from 2-oxobutanoate: step 2/4. The protein operates within amino-acid biosynthesis; L-valine biosynthesis; L-valine from pyruvate: step 2/4. Functionally, involved in the biosynthesis of branched-chain amino acids (BCAA). Catalyzes an alkyl-migration followed by a ketol-acid reduction of (S)-2-acetolactate (S2AL) to yield (R)-2,3-dihydroxy-isovalerate. In the isomerase reaction, S2AL is rearranged via a Mg-dependent methyl migration to produce 3-hydroxy-3-methyl-2-ketobutyrate (HMKB). In the reductase reaction, this 2-ketoacid undergoes a metal-dependent reduction by NADPH to yield (R)-2,3-dihydroxy-isovalerate. The protein is Ketol-acid reductoisomerase (NADP(+)) of Methylococcus capsulatus (strain ATCC 33009 / NCIMB 11132 / Bath).